The sequence spans 149 residues: 3-dehydroquinate dehydratase (149 aa).

The Proton acceptor role is filled by Y23. Positions 75, 81, and 88 each coordinate substrate. H101 serves as the catalytic Proton donor. Substrate is bound by residues 102 to 103 (MS) and R112.

The protein belongs to the type-II 3-dehydroquinase family. As to quaternary structure, homododecamer.

The enzyme catalyses 3-dehydroquinate = 3-dehydroshikimate + H2O. It functions in the pathway metabolic intermediate biosynthesis; chorismate biosynthesis; chorismate from D-erythrose 4-phosphate and phosphoenolpyruvate: step 3/7. Functionally, catalyzes a trans-dehydration via an enolate intermediate. The protein is 3-dehydroquinate dehydratase of Pelobacter propionicus (strain DSM 2379 / NBRC 103807 / OttBd1).